A 133-amino-acid polypeptide reads, in one-letter code: MVFVNPLANALTSIYNNEMRRNKQAIIMPASKLVINVLRVMQKEGYVGEFEYIDDGRWGKITVQLLGRVNKCGPITPRYPLSYRQMIALPDYVRRYLPSKEIGIIIVSTSKGVMSHKEAARLRIGGVALGYVY.

Belongs to the universal ribosomal protein uS8 family. As to quaternary structure, part of the 30S ribosomal subunit.

One of the primary rRNA binding proteins, it binds directly to 16S rRNA central domain where it helps coordinate assembly of the platform of the 30S subunit. This is Small ribosomal subunit protein uS8 from Saccharolobus solfataricus (strain ATCC 35092 / DSM 1617 / JCM 11322 / P2) (Sulfolobus solfataricus).